The chain runs to 894 residues: Leucine--tRNA ligase, mitochondrial (894 aa).

The transit peptide at 1–9 (MLPRPSSRF) directs the protein to the mitochondrion. The short motif at 56 to 66 (PYPSGVLHIGH) is the 'HIGH' region element. The 'KMSKS' region signature appears at 646–650 (KMSKS). An ATP-binding site is contributed by lysine 649.

This sequence belongs to the class-I aminoacyl-tRNA synthetase family.

It is found in the mitochondrion matrix. The catalysed reaction is tRNA(Leu) + L-leucine + ATP = L-leucyl-tRNA(Leu) + AMP + diphosphate. The polypeptide is Leucine--tRNA ligase, mitochondrial (NAM2) (Saccharomyces paradoxus (Yeast)).